The primary structure comprises 363 residues: Phosphoserine aminotransferase (363 aa).

Arg42 is a binding site for L-glutamate. Residues 76–77 (GR), Trp102, Thr156, Asp175, and Gln198 contribute to the pyridoxal 5'-phosphate site. Residue Lys199 is modified to N6-(pyridoxal phosphate)lysine. 240–241 (NT) contributes to the pyridoxal 5'-phosphate binding site.

This sequence belongs to the class-V pyridoxal-phosphate-dependent aminotransferase family. SerC subfamily. Homodimer. Pyridoxal 5'-phosphate serves as cofactor.

The protein resides in the cytoplasm. It carries out the reaction O-phospho-L-serine + 2-oxoglutarate = 3-phosphooxypyruvate + L-glutamate. The enzyme catalyses 4-(phosphooxy)-L-threonine + 2-oxoglutarate = (R)-3-hydroxy-2-oxo-4-phosphooxybutanoate + L-glutamate. It functions in the pathway amino-acid biosynthesis; L-serine biosynthesis; L-serine from 3-phospho-D-glycerate: step 2/3. Its pathway is cofactor biosynthesis; pyridoxine 5'-phosphate biosynthesis; pyridoxine 5'-phosphate from D-erythrose 4-phosphate: step 3/5. Functionally, catalyzes the reversible conversion of 3-phosphohydroxypyruvate to phosphoserine and of 3-hydroxy-2-oxo-4-phosphonooxybutanoate to phosphohydroxythreonine. The chain is Phosphoserine aminotransferase from Shewanella piezotolerans (strain WP3 / JCM 13877).